Reading from the N-terminus, the 54-residue chain is Ovomucoid (54 aa).

The region spanning 4–54 (VDCSDYPKPVCSLEYMPLCGSDSKTYSNKCDFCNAFVDSNGTLSLSHFGKC) is the Kazal-like domain. Cystine bridges form between Cys-6-Cys-36, Cys-14-Cys-33, and Cys-22-Cys-54. N-linked (GlcNAc...) asparagine glycosylation is present at Asn-43.

The protein localises to the secreted. The protein is Ovomucoid of Circus aeruginosus (Western marsh harrier).